Reading from the N-terminus, the 438-residue chain is Ribosomal protein uS12 methylthiotransferase RimO (438 aa).

Residues 4 to 120 (HSLFLLSLGC…ILASLGARYR (117 aa)) enclose the MTTase N-terminal domain. The [4Fe-4S] cluster site is built by C13, C49, C83, C144, C148, and C151. One can recognise a Radical SAM core domain in the interval 130–359 (LTPSHYAYLK…MELQEAVAES (230 aa)). Positions 362–429 (REFEGKEIEV…AHELYGEIVQ (68 aa)) constitute a TRAM domain.

Belongs to the methylthiotransferase family. RimO subfamily. It depends on [4Fe-4S] cluster as a cofactor.

Its subcellular location is the cytoplasm. It catalyses the reaction L-aspartate(89)-[ribosomal protein uS12]-hydrogen + (sulfur carrier)-SH + AH2 + 2 S-adenosyl-L-methionine = 3-methylsulfanyl-L-aspartate(89)-[ribosomal protein uS12]-hydrogen + (sulfur carrier)-H + 5'-deoxyadenosine + L-methionine + A + S-adenosyl-L-homocysteine + 2 H(+). In terms of biological role, catalyzes the methylthiolation of an aspartic acid residue of ribosomal protein uS12. The chain is Ribosomal protein uS12 methylthiotransferase RimO from Chlorobium chlorochromatii (strain CaD3).